The sequence spans 80 residues: Acyl carrier protein (80 aa).

In terms of domain architecture, Carrier spans 4-79; that stretch reads EAILEKVRSI…DAVKYIEEKQ (76 aa). Ser39 bears the O-(pantetheine 4'-phosphoryl)serine mark.

Belongs to the acyl carrier protein (ACP) family. 4'-phosphopantetheine is transferred from CoA to a specific serine of apo-ACP by AcpS. This modification is essential for activity because fatty acids are bound in thioester linkage to the sulfhydryl of the prosthetic group.

It localises to the cytoplasm. The protein operates within lipid metabolism; fatty acid biosynthesis. Functionally, carrier of the growing fatty acid chain in fatty acid biosynthesis. This chain is Acyl carrier protein, found in Prochlorococcus marinus (strain NATL1A).